A 318-amino-acid chain; its full sequence is Nisin-resistance protein (318 aa).

Residues 7–28 form a helical membrane-spanning segment; the sequence is ILLGLVAVCALFLGIIYLWGYK.

It is found in the cell membrane. The protein is Nisin-resistance protein (nsr) of Lactococcus lactis subsp. lactis (Streptococcus lactis).